Consider the following 194-residue polypeptide: Ribosome maturation factor RimM (194 aa).

The PRC barrel domain occupies 92–190 (DDGYYDHELI…ALVVTPPEGL (99 aa)).

Belongs to the RimM family. In terms of assembly, binds ribosomal protein uS19.

It is found in the cytoplasm. Its function is as follows. An accessory protein needed during the final step in the assembly of 30S ribosomal subunit, possibly for assembly of the head region. Essential for efficient processing of 16S rRNA. May be needed both before and after RbfA during the maturation of 16S rRNA. It has affinity for free ribosomal 30S subunits but not for 70S ribosomes. This chain is Ribosome maturation factor RimM, found in Corynebacterium urealyticum (strain ATCC 43042 / DSM 7109).